The sequence spans 436 residues: 3-ketoacyl-CoA thiolase (436 aa).

Catalysis depends on Cys-99, which acts as the Acyl-thioester intermediate. Residues His-392 and Cys-422 each act as proton acceptor in the active site.

The protein belongs to the thiolase-like superfamily. Thiolase family. As to quaternary structure, heterotetramer of two alpha chains (FadJ) and two beta chains (FadI).

The protein resides in the cytoplasm. The enzyme catalyses an acyl-CoA + acetyl-CoA = a 3-oxoacyl-CoA + CoA. It functions in the pathway lipid metabolism; fatty acid beta-oxidation. In terms of biological role, catalyzes the final step of fatty acid oxidation in which acetyl-CoA is released and the CoA ester of a fatty acid two carbons shorter is formed. The protein is 3-ketoacyl-CoA thiolase of Salmonella schwarzengrund (strain CVM19633).